Consider the following 48-residue polypeptide: Large ribosomal subunit protein bL32 (48 aa).

A disordered region spans residues 1–20; the sequence is MAVPDRRVSKTRAAKRRTHY. The segment covering 9–20 has biased composition (basic residues); the sequence is SKTRAAKRRTHY.

The protein belongs to the bacterial ribosomal protein bL32 family.

This is Large ribosomal subunit protein bL32 from Helicobacter acinonychis (strain Sheeba).